Consider the following 175-residue polypeptide: Transcriptional regulator GadE (175 aa).

Residues 109–174 (HKNSQLCFSH…DIVTLGITSY (66 aa)) enclose the HTH luxR-type domain. A DNA-binding region (H-T-H motif) is located at residues 133-152 (ESNITSTLNISQQTLKIQKF).

Regulates the expression of several genes involved in acid resistance. Required for the expression of gadA and gadBC, among others, regardless of media or growth conditions. Binds directly to the 20 bp GAD box found in the control regions of both loci. Could be involved in the regulation of the genes coding for the type III secretion system in enterohaemorragic strains. This Escherichia coli O157:H7 protein is Transcriptional regulator GadE (gadE).